The sequence spans 75 residues: Small ribosomal subunit protein bS18 (75 aa).

It belongs to the bacterial ribosomal protein bS18 family. As to quaternary structure, part of the 30S ribosomal subunit. Forms a tight heterodimer with protein bS6.

Its function is as follows. Binds as a heterodimer with protein bS6 to the central domain of the 16S rRNA, where it helps stabilize the platform of the 30S subunit. This is Small ribosomal subunit protein bS18 from Shewanella baltica (strain OS223).